A 3096-amino-acid chain; its full sequence is Cilia- and flagella-associated protein 54 (3096 aa).

Positions 1–45 (MAAQGSPSSSPSDDSTTSGSLPELPPTSTATSRSPPESKGSSRSS) are enriched in low complexity. 2 disordered regions span residues 1–46 (MAAQ…RSSL) and 1248–1267 (SNEQ…LKTK).

Belongs to the CFAP54 family.

Its subcellular location is the cytoplasm. The protein resides in the cytoskeleton. The protein localises to the cilium axoneme. Functionally, required for assembly and function of cilia and flagella. The sequence is that of Cilia- and flagella-associated protein 54 from Homo sapiens (Human).